The following is a 641-amino-acid chain: Serine/threonine-protein kinase pink-1, mitochondrial (641 aa).

A mitochondrion-targeting transit peptide spans 1–74 (MSMKRFGKAA…TRHGRVFRPF (74 aa)). In terms of domain architecture, Protein kinase spans 137 to 483 (YEFGEFLGQG…AANALNLSLF (347 aa)). ATP-binding positions include 143–151 (LGQGCNAAV) and Lys-199. Catalysis depends on Asp-338, which acts as the Proton acceptor.

It belongs to the protein kinase superfamily. Ser/Thr protein kinase family. Mg(2+) is required as a cofactor. In terms of processing, autophosphorylated.

It localises to the mitochondrion. The enzyme catalyses L-seryl-[protein] + ATP = O-phospho-L-seryl-[protein] + ADP + H(+). It carries out the reaction L-threonyl-[protein] + ATP = O-phospho-L-threonyl-[protein] + ADP + H(+). Functionally, protects against mitochondrial dysfunction during cellular stress, potentially by phosphorylating mitochondrial proteins. Plays a role in mitophagy. The polypeptide is Serine/threonine-protein kinase pink-1, mitochondrial (pink-1) (Caenorhabditis elegans).